A 458-amino-acid polypeptide reads, in one-letter code: Argininosuccinate lyase (458 aa).

Belongs to the lyase 1 family. Argininosuccinate lyase subfamily.

The protein localises to the cytoplasm. It catalyses the reaction 2-(N(omega)-L-arginino)succinate = fumarate + L-arginine. It participates in amino-acid biosynthesis; L-arginine biosynthesis; L-arginine from L-ornithine and carbamoyl phosphate: step 3/3. This is Argininosuccinate lyase from Geobacter metallireducens (strain ATCC 53774 / DSM 7210 / GS-15).